The following is a 463-amino-acid chain: Protein translocase subunit SecY (463 aa).

Over M1–P20 the chain is Cytoplasmic. The helical transmembrane segment at K21–P47 threads the bilayer. The Extracellular segment spans residues L48–N60. The helical intramembrane region spans F61–F68. A discontinuously helical transmembrane segment spans residues F61–I89. An intramembrane segment occupies A69 to I80. The segment at residues G81–I89 is an intramembrane region (helical). At M90 to S110 the chain is on the cytoplasmic side. The chain crosses the membrane as a helical span at residues K111–V134. The Extracellular segment spans residues F135–I142. The chain crosses the membrane as a helical span at residues L143–Q167. The Cytoplasmic portion of the chain corresponds to K168–S174. A helical membrane pass occupies residues G175–F193. Topologically, residues G194–P236 are extracellular. Residues D237–N258 traverse the membrane as a helical segment. At I259 to S283 the chain is on the cytoplasmic side. A helical transmembrane segment spans residues S284 to N305. Residues S306–V341 are Extracellular-facing. The chain crosses the membrane as a helical span at residues G342 to W361. Residues I362 to L404 lie on the Cytoplasmic side of the membrane. The chain crosses the membrane as a helical span at residues G405–G423. The Extracellular segment spans residues T424–G426. The helical transmembrane segment at T427 to Y441 threads the bilayer. Residues Y442–E463 lie on the Cytoplasmic side of the membrane.

Belongs to the SecY/SEC61-alpha family. As to quaternary structure, component of the Sec protein translocase complex. Heterotrimer consisting of alpha (SecY), beta (SecG) and gamma (SecE) subunits. The heterotrimers can form oligomers, although 1 heterotrimer is thought to be able to translocate proteins. Interacts with the ribosome. May interact with SecDF, and other proteins may be involved.

It localises to the cell membrane. Its function is as follows. The central subunit of the protein translocation channel SecYEG. Consists of two halves formed by TMs 1-5 and 6-10. These two domains form a lateral gate at the front which open onto the bilayer between TMs 2 and 7, and are clamped together by SecE at the back. The channel is closed by both a pore ring composed of hydrophobic SecY resides and a short helix (helix 2A) on the extracellular side of the membrane which forms a plug. The plug probably moves laterally to allow the channel to open. The ring and the pore may move independently. This is Protein translocase subunit SecY from Sulfolobus acidocaldarius (strain ATCC 33909 / DSM 639 / JCM 8929 / NBRC 15157 / NCIMB 11770).